The following is a 54-amino-acid chain: uncharacterized protein (54 aa).

The segment covering aspartate 23 to asparagine 35 has biased composition (basic and acidic residues). The segment at aspartate 23–valine 54 is disordered. The span at glutamine 42 to valine 54 shows a compositional bias: polar residues.

This is an uncharacterized protein from Bacillus subtilis (strain 168).